The sequence spans 87 residues: Keratin-associated protein 19-1 (87 aa).

The tract at residues 6-72 (GYSGGLGYGY…SSYGGYGCGC (67 aa)) is 21 X 2 AA repeats of G-[YCGS].

It belongs to the KRTAP type 19 family. Interacts with hair keratins. As to expression, strong expression in narrowly defined pattern restricted to the lower and middle cortical regions of the hair shaft in both developing and cycling hair. During hair follicle regression (catagen), expression levels decrease until expression is no longer detectable in follicles at resting stage (telogen).

In the hair cortex, hair keratin intermediate filaments are embedded in an interfilamentous matrix, consisting of hair keratin-associated proteins (KRTAP), which are essential for the formation of a rigid and resistant hair shaft through their extensive disulfide bond cross-linking with abundant cysteine residues of hair keratins. The matrix proteins include the high-sulfur and high-glycine-tyrosine keratins. The protein is Keratin-associated protein 19-1 (Krtap19-1) of Mus musculus (Mouse).